A 270-amino-acid chain; its full sequence is 4-hydroxy-tetrahydrodipicolinate reductase (270 aa).

NAD(+) is bound by residues Gly9–Met14 and Glu35. Arg36 is a binding site for NADP(+). Residues Gly99 to Thr101 and Ala123 to Phe126 contribute to the NAD(+) site. The active-site Proton donor/acceptor is His156. His157 is a (S)-2,3,4,5-tetrahydrodipicolinate binding site. The Proton donor role is filled by Lys160. Gly166 to Thr167 contributes to the (S)-2,3,4,5-tetrahydrodipicolinate binding site.

The protein belongs to the DapB family.

It localises to the cytoplasm. The catalysed reaction is (S)-2,3,4,5-tetrahydrodipicolinate + NAD(+) + H2O = (2S,4S)-4-hydroxy-2,3,4,5-tetrahydrodipicolinate + NADH + H(+). The enzyme catalyses (S)-2,3,4,5-tetrahydrodipicolinate + NADP(+) + H2O = (2S,4S)-4-hydroxy-2,3,4,5-tetrahydrodipicolinate + NADPH + H(+). It functions in the pathway amino-acid biosynthesis; L-lysine biosynthesis via DAP pathway; (S)-tetrahydrodipicolinate from L-aspartate: step 4/4. Functionally, catalyzes the conversion of 4-hydroxy-tetrahydrodipicolinate (HTPA) to tetrahydrodipicolinate. This Haemophilus influenzae (strain PittGG) protein is 4-hydroxy-tetrahydrodipicolinate reductase.